The sequence spans 97 residues: uncharacterized protein (97 aa).

The first 21 residues, 1–21 (MLLHGLGRMNIIFICFPSLAC), serve as a signal peptide directing secretion.

This is an uncharacterized protein from Schizosaccharomyces pombe (strain 972 / ATCC 24843) (Fission yeast).